The chain runs to 419 residues: Metacaspase-1B (419 aa).

The tract at residues 1-109 (MYHPNYNYPP…PPMEAQQFGK (109 aa)) is disordered. The span at 33-50 (SPPPPQPYYSNGYPPPSQ) shows a compositional bias: pro residues. The segment covering 51–66 (SPHSYSPPQYPPHGQY) has biased composition (low complexity). Polar residues predominate over residues 82–93 (QYRSYHSHSPSW). Residues His-210 and Cys-266 contribute to the active site.

This sequence belongs to the peptidase C14B family.

Involved in cell death (apoptosis). The chain is Metacaspase-1B (casB) from Aspergillus oryzae (strain ATCC 42149 / RIB 40) (Yellow koji mold).